Reading from the N-terminus, the 645-residue chain is L-aspartate oxidase, chloroplastic (645 aa).

Residues 1–70 (MAALMNGFGS…RMRHKVGSIR (70 aa)) constitute a chloroplast transit peptide. FAD-binding positions include 92–95 (SGVA), K114, 121–128 (NTNYAQGG), and D292. Residue R368 is the Proton donor/acceptor of the active site. Residues E453 and 469–470 (SL) each bind FAD.

This sequence belongs to the FAD-dependent oxidoreductase 2 family. NadB subfamily. It depends on FAD as a cofactor.

The protein resides in the plastid. It localises to the chloroplast. The enzyme catalyses L-aspartate + O2 = iminosuccinate + H2O2. Its pathway is cofactor biosynthesis; NAD(+) biosynthesis; iminoaspartate from L-aspartate (oxidase route): step 1/1. Catalyzes the oxidation of L-aspartate to iminoaspartate. The protein is L-aspartate oxidase, chloroplastic of Oryza sativa subsp. japonica (Rice).